A 203-amino-acid polypeptide reads, in one-letter code: High-molecular weight cobalt-containing nitrile hydratase subunit alpha (203 aa).

C102, C105, S106, and C107 together coordinate Co(3+).

The protein belongs to the nitrile hydratase subunit alpha family. In terms of assembly, heterodimer of an alpha and a beta chain. Co(3+) is required as a cofactor.

The catalysed reaction is an aliphatic primary amide = an aliphatic nitrile + H2O. In terms of biological role, NHase catalyzes the hydration of various nitrile compounds to the corresponding amides. This is High-molecular weight cobalt-containing nitrile hydratase subunit alpha (nhhA) from Rhodococcus rhodochrous.